The following is a 255-amino-acid chain: Hydroxyacylglutathione hydrolase (255 aa).

His-53, His-55, Asp-57, His-58, His-110, Asp-127, and His-165 together coordinate Zn(2+).

Belongs to the metallo-beta-lactamase superfamily. Glyoxalase II family. As to quaternary structure, monomer. Zn(2+) is required as a cofactor.

It carries out the reaction an S-(2-hydroxyacyl)glutathione + H2O = a 2-hydroxy carboxylate + glutathione + H(+). It participates in secondary metabolite metabolism; methylglyoxal degradation; (R)-lactate from methylglyoxal: step 2/2. Functionally, thiolesterase that catalyzes the hydrolysis of S-D-lactoyl-glutathione to form glutathione and D-lactic acid. The sequence is that of Hydroxyacylglutathione hydrolase from Xanthomonas campestris pv. campestris (strain 8004).